The sequence spans 258 residues: Thiazole synthase (258 aa).

The Schiff-base intermediate with DXP role is filled by K100. 1-deoxy-D-xylulose 5-phosphate contacts are provided by residues G161, 187-188 (AG), and 209-210 (NT).

It belongs to the ThiG family. As to quaternary structure, homotetramer. Forms heterodimers with either ThiH or ThiS.

The protein localises to the cytoplasm. It catalyses the reaction [ThiS sulfur-carrier protein]-C-terminal-Gly-aminoethanethioate + 2-iminoacetate + 1-deoxy-D-xylulose 5-phosphate = [ThiS sulfur-carrier protein]-C-terminal Gly-Gly + 2-[(2R,5Z)-2-carboxy-4-methylthiazol-5(2H)-ylidene]ethyl phosphate + 2 H2O + H(+). It participates in cofactor biosynthesis; thiamine diphosphate biosynthesis. In terms of biological role, catalyzes the rearrangement of 1-deoxy-D-xylulose 5-phosphate (DXP) to produce the thiazole phosphate moiety of thiamine. Sulfur is provided by the thiocarboxylate moiety of the carrier protein ThiS. In vitro, sulfur can be provided by H(2)S. The sequence is that of Thiazole synthase from Campylobacter jejuni subsp. jejuni serotype O:2 (strain ATCC 700819 / NCTC 11168).